The following is a 240-amino-acid chain: Probable transcriptional regulatory protein Hac_0344 (240 aa).

The protein belongs to the TACO1 family.

The protein localises to the cytoplasm. The chain is Probable transcriptional regulatory protein Hac_0344 from Helicobacter acinonychis (strain Sheeba).